Consider the following 687-residue polypeptide: DNA-directed RNA polymerase subunit beta' (687 aa).

Zn(2+)-binding residues include C69, C71, C87, and C90. Mg(2+) is bound by residues D493, D495, and D497.

This sequence belongs to the RNA polymerase beta' chain family. RpoC1 subfamily. In terms of assembly, in plastids the minimal PEP RNA polymerase catalytic core is composed of four subunits: alpha, beta, beta', and beta''. When a (nuclear-encoded) sigma factor is associated with the core the holoenzyme is formed, which can initiate transcription. It depends on Mg(2+) as a cofactor. Requires Zn(2+) as cofactor.

It localises to the plastid. The protein resides in the chloroplast. The catalysed reaction is RNA(n) + a ribonucleoside 5'-triphosphate = RNA(n+1) + diphosphate. Its function is as follows. DNA-dependent RNA polymerase catalyzes the transcription of DNA into RNA using the four ribonucleoside triphosphates as substrates. This chain is DNA-directed RNA polymerase subunit beta', found in Angiopteris evecta (Mule's foot fern).